The primary structure comprises 208 residues: Large ribosomal subunit protein uL4 (208 aa).

The disordered stretch occupies residues Arg-45–His-95. Over residues Gly-69 to Ser-80 the composition is skewed to polar residues.

It belongs to the universal ribosomal protein uL4 family. In terms of assembly, part of the 50S ribosomal subunit.

One of the primary rRNA binding proteins, this protein initially binds near the 5'-end of the 23S rRNA. It is important during the early stages of 50S assembly. It makes multiple contacts with different domains of the 23S rRNA in the assembled 50S subunit and ribosome. Functionally, forms part of the polypeptide exit tunnel. The chain is Large ribosomal subunit protein uL4 from Chlorobium chlorochromatii (strain CaD3).